Here is a 392-residue protein sequence, read N- to C-terminus: Type III polyketide synthase B (392 aa).

57–64 (KLTRLCKT) provides a ligand contact to CoA. The Nucleophile role is filled by Cys-166. 218-219 (GD) is a substrate binding site. Residues Leu-269, 309–312 (GGPA), and Ala-312 each bind CoA.

It belongs to the thiolase-like superfamily. Chalcone/stilbene synthases family. In terms of assembly, homodimer. Interacts with 4CLL1/ACOS5 and TKPR1. As to expression, expressed in flowers and flower buds (at protein level). Mostly confined to anther tapetal cells.

The protein resides in the endoplasmic reticulum. Its pathway is secondary metabolite biosynthesis; flavonoid biosynthesis. Functionally, plant type III polyketide synthases (PKSs) that catalyzes the condensation of malonyl-CoA units with various CoA ester starter molecules to generate a diverse array of natural products including long-chain alkyl alpha-pyrones. Accepts up to C(20) chain-length fatty acyl CoAs as starter substrates, and carries out sequential condensations with malonyl-CoA to produce triketide and tetraketide alpha-pyrones, potential sporopollenin precursors. Favorite substrates for are midchain- and v-hydroxylated fatty acyl-CoAs (e.g. 12-hydroxyoctadecanoyl-CoA and 16-hydroxyhexadecanoyl-CoA). Required for pollen development and sporopollenin biosynthesis, the major constituent of exine in the outer pollen wall. In vitro, can use 4-coumaroyl-coenzyme A as substrate to produce bis-noryangonin and fatty acyl-coenzyme A as substrate to produce medium-chain alkyl pyrones. May play a role in both the synthesis of pollen fatty acids and phenolics found in exine. The polypeptide is Type III polyketide synthase B (Arabidopsis thaliana (Mouse-ear cress)).